We begin with the raw amino-acid sequence, 440 residues long: Chromosome partition protein MukF (440 aa).

Residues Leu208–Ile236 form a leucine-zipper region.

This sequence belongs to the MukF family. Interacts, and probably forms a ternary complex, with MukE and MukB via its C-terminal region. The complex formation is stimulated by calcium or magnesium. It is required for an interaction between MukE and MukB.

The protein localises to the cytoplasm. It localises to the nucleoid. Its function is as follows. Involved in chromosome condensation, segregation and cell cycle progression. May participate in facilitating chromosome segregation by condensation DNA from both sides of a centrally located replisome during cell division. Not required for mini-F plasmid partitioning. Probably acts via its interaction with MukB and MukE. Overexpression results in anucleate cells. It has a calcium binding activity. The sequence is that of Chromosome partition protein MukF from Escherichia coli (strain UTI89 / UPEC).